Consider the following 391-residue polypeptide: MRKLFTSESVTEGHPDKICDQISDAVLDAILDKDPNGRVACETAVTTGMVMVMGEISTKCYVDIPKLVRETIRGIGYDRAKYGFDCETCSVITSIDEQSVDIAMGVDEALESKKGEMDKLDAVGAGDQGMMFGFATNETKEYMPMPIEMAHKLSRRLSEVRKNGTLPYLRPDGKTQVTVEYENGKPVRIDAIVISTQHGPEVYLEQIEKDIKEHVIKVIVPSELLDENTKYFINPTGRFVVGGPQGDSGLTGRKIIVDTYGGYGRHGGGAFSGKDPTKVDRSAAYAARWVAKNLVAAGVADKLEIQLAYAIGVAKPVSISVDTFGTGKMTDEEIVSIVNKVFDLRPGAIIRDLDLRRPIYKQVAAYGHFGRTDIDVPWERLDKVEEIKKHI.

Histidine 14 is an ATP binding site. Aspartate 16 is a binding site for Mg(2+). Position 42 (glutamate 42) interacts with K(+). L-methionine is bound by residues glutamate 55 and glutamine 98. Positions 98 to 108 (QSVDIAMGVDE) are flexible loop. ATP-binding positions include 172–174 (DGK), 238–239 (RF), aspartate 247, 253–254 (RK), alanine 270, and lysine 274. Aspartate 247 is a binding site for L-methionine. Residue lysine 278 participates in L-methionine binding.

The protein belongs to the AdoMet synthase family. Homotetramer; dimer of dimers. It depends on Mg(2+) as a cofactor. K(+) serves as cofactor.

The protein localises to the cytoplasm. The catalysed reaction is L-methionine + ATP + H2O = S-adenosyl-L-methionine + phosphate + diphosphate. It functions in the pathway amino-acid biosynthesis; S-adenosyl-L-methionine biosynthesis; S-adenosyl-L-methionine from L-methionine: step 1/1. Functionally, catalyzes the formation of S-adenosylmethionine (AdoMet) from methionine and ATP. The overall synthetic reaction is composed of two sequential steps, AdoMet formation and the subsequent tripolyphosphate hydrolysis which occurs prior to release of AdoMet from the enzyme. The polypeptide is S-adenosylmethionine synthase (Clostridium botulinum (strain Hall / ATCC 3502 / NCTC 13319 / Type A)).